A 369-amino-acid polypeptide reads, in one-letter code: Anhydro-N-acetylmuramic acid kinase (369 aa).

12-19 (GTSLDGVD) contacts ATP.

It belongs to the anhydro-N-acetylmuramic acid kinase family.

The catalysed reaction is 1,6-anhydro-N-acetyl-beta-muramate + ATP + H2O = N-acetyl-D-muramate 6-phosphate + ADP + H(+). Its pathway is amino-sugar metabolism; 1,6-anhydro-N-acetylmuramate degradation. It functions in the pathway cell wall biogenesis; peptidoglycan recycling. In terms of biological role, catalyzes the specific phosphorylation of 1,6-anhydro-N-acetylmuramic acid (anhMurNAc) with the simultaneous cleavage of the 1,6-anhydro ring, generating MurNAc-6-P. Is required for the utilization of anhMurNAc either imported from the medium or derived from its own cell wall murein, and thus plays a role in cell wall recycling. The polypeptide is Anhydro-N-acetylmuramic acid kinase (Escherichia coli O6:K15:H31 (strain 536 / UPEC)).